The following is a 795-amino-acid chain: MNELFQTPQVEAGIKEYPLMPLRDIVIFPTMVQPLFVGRRFSIRAIEEANKKDKLIFLVLQKDKDVEEPKEEDIYKVGVVAYILRTVPIEDARVKVLVQGLKRGVIKKLEWKEDHYVAQVDVIEERDIPPESQTIEDKALIKAVKESIDKLVSLGKQIIPDLVVLIKELEEPGKLADMVASILDIKSSQAQEILETFDPRERLKKVYKFLQDEIGLLEVKQRISEIARERMEKEQREYYLRQQLKAIQEELGEAGGIKAEIEEYTKKFEEVKECMPEEGVKEVEKNIKRLERLHPESAEAGVIRTWLDWVLDLPWCTRTEDNYDLERAREILDRDHYDLEKVKDRIIEYLAIRKLTQGKEAPTQILAFVGPPGVGKTSLGRSIAEALGRKFVRIALGGIRDEAEIRGHRRTYVGAMPGRIIQAIKQAGTKNPVIMLDEIDKLAISFQGDPAAALLEVLDPEQNKKFTDLYIGIPFDLSEVIFICTGNRADTIPTPLLDRMELIMLSGYSEEEKLFIAKKHLIPKLIPLHGFSPEEIEFTDEAILEIIRGYTREAGVRNLQRQISAVLRKIAVKKLQGEKGPFNITPELVRKLLGVPRYRPEREKKPLVGVATGLAWTEVGGEIMFIEATKMKGKGSLVLTGSLGDIMKESAQAALSYIRSKAEDYGIDPDIFSQVDVHVHVPEGAVPKDGPSAGVAIATALLSLFTDIPVRMDVAMTGEITLRGRVLPVGGLKEKILAAKRAEIYEVILPAKNKDEVMEELPEYVREKMTLHFVDNLEEVFKIALVREPKPLKEA.

The region spanning 17–214 (YPLMPLRDIV…KVYKFLQDEI (198 aa)) is the Lon N-terminal domain. 370–377 (GPPGVGKT) is an ATP binding site. Residues 605–787 (KPLVGVATGL…EEVFKIALVR (183 aa)) form the Lon proteolytic domain. Catalysis depends on residues Ser692 and Lys735.

The protein belongs to the peptidase S16 family. As to quaternary structure, homohexamer. Organized in a ring with a central cavity.

Its subcellular location is the cytoplasm. It carries out the reaction Hydrolysis of proteins in presence of ATP.. Functionally, ATP-dependent serine protease that mediates the selective degradation of mutant and abnormal proteins as well as certain short-lived regulatory proteins. Required for cellular homeostasis and for survival from DNA damage and developmental changes induced by stress. Degrades polypeptides processively to yield small peptide fragments that are 5 to 10 amino acids long. Binds to DNA in a double-stranded, site-specific manner. The chain is Lon protease from Aquifex aeolicus (strain VF5).